The following is a 123-amino-acid chain: Protein Wnt-7a (123 aa).

Residue Ser1 is the site of O-palmitoleoyl serine; by PORCN attachment. A disordered linker region spans residues 33–61 (VEPVRASRNKRPTFLKIKKPLSYLKPMDT). The cysteines at positions 89 and 104 are disulfide-linked. Asn90 carries N-linked (GlcNAc...) asparagine glycosylation.

Belongs to the Wnt family. In terms of processing, palmitoleoylation is required for efficient binding to frizzled receptors. Depalmitoleoylation leads to Wnt signaling pathway inhibition.

It localises to the secreted. The protein resides in the extracellular space. Its subcellular location is the extracellular matrix. In terms of biological role, ligand for members of the frizzled family of seven transmembrane receptors that functions in the canonical Wnt/beta-catenin signaling pathway. Plays an important role in embryonic development, including dorsal versus ventral patterning during limb development, skeleton development and urogenital tract development. Required for central nervous system (CNS) angiogenesis and blood-brain barrier regulation. The polypeptide is Protein Wnt-7a (WNT-7A) (Plethodon jordani (Red-cheeked salamander)).